We begin with the raw amino-acid sequence, 89 residues long: Probable Fe(2+)-trafficking protein (89 aa).

Belongs to the Fe(2+)-trafficking protein family.

Could be a mediator in iron transactions between iron acquisition and iron-requiring processes, such as synthesis and/or repair of Fe-S clusters in biosynthetic enzymes. The sequence is that of Probable Fe(2+)-trafficking protein from Stenotrophomonas maltophilia (strain R551-3).